We begin with the raw amino-acid sequence, 176 residues long: Glycine-rich RNA-binding protein 7 (176 aa).

Alanine 2 is modified (N-acetylalanine). The required for RNA chaperone activity stretch occupies residues 2–41 (ASGDVEYRCFVGGLAWATDDRALETAFAQYGDVIDSKIIN). The RRM domain maps to 8–86 (YRCFVGGLAW…RSITVNEAQS (79 aa)). Residue arginine 49 is modified to ADP-ribosylarginine; by HopU1. The disordered stretch occupies residues 83-103 (EAQSRGSGGGGGHRGGGGGGY). Over residues 88–103 (GSGGGGGHRGGGGGGY) the composition is skewed to gly residues. The glycine-rich (GR) required for cell-to-cell movement stretch occupies residues 88-175 (GSGGGGGHRG…GYGGSGGGGG (88 aa)). The interval 97–148 (GGGGGGYRSGGGGGYSGGGGSYGGGGGRREGGGGYSGGGGGYSSRGGGGGSY) is nuclear targeting sequence (M9). Phosphoserine occurs at positions 105 and 117. The disordered stretch occupies residues 131–176 (YSGGGGGYSSRGGGGGSYGGGRREGGGGYGGGEGGGYGGSGGGGGW).

The protein belongs to the GR-RBP family. Interacts with TRN1. Interacts with the Pseudomonas syringae type III effector HopU1. Binds to small phloem-mobile single-stranded RNAs (ss-sRNA, e.g. small interfering RNA (siRNA) and microRNA (miRNA)) in the phloeme exudate, including viral-derived sRNA (vsiRNA). Post-translationally, ADP-ribosylated by the Pseudomonas syringae type III effector HopU1. ADP-ribosylation reduces the ability of the protein to bind RNA. As to expression, ubiquitous with strong expression in guard cell.

Its subcellular location is the cytoplasm. It localises to the nucleus. It is found in the secreted. Its function is as follows. Plays a role in RNA transcription or processing during stress. Binds RNAs and DNAs sequence with a preference to single-stranded nucleic acids. Displays strong affinity to poly(U) and poly(G) sequence. Involved in mRNA alternative splicing of numerous targets by modulating splice site selection. Negatively regulates the circadian oscillations of its own transcript as well as RBG8 transcript. Forms an interlocked post-transcriptional negative feedback loop with the RBG8 autoregulatory circuit. Both proteins negatively autoregulate and reciprocally crossregulate by binding to their pre-mRNAs and promoting unproductive splicing coupled to degradation via the NMD pathway. Involved in the regulation of abscisic acid and stress responses. Affects the growth and stress tolerance under high salt and dehydration stress conditions, and also confers freezing tolerance, particularly via the regulation of stomatal opening and closing in the guard cells. Exhibits RNA chaperone activity during the cold adaptation process. Involved in the export of mRNAs from the nucleus to the cytoplasm under cold stress conditions. Target of the Pseudomonas syringae type III effector HopU1, which could probably be involved in plant innate immunity. Component of the flowering autonomous pathway which promotes floral transition, at least partly by down-regulating FLC. Mediates cell-to-cell trafficking of RNA interference (RNAi) signals (small RNAs (sRNA), e.g. small interfering RNA (siRNA) and microRNA (miRNA)) which regulate growth and development, as well as responses to environmental inputs, including pathogen attack; can compromise zucchini yellow mosaic virus (ZYMV) and tobacco rattle virus (TRV) infections at the early stage. In Arabidopsis thaliana (Mouse-ear cress), this protein is Glycine-rich RNA-binding protein 7.